A 184-amino-acid chain; its full sequence is NEDD8-conjugating enzyme UBC12 (184 aa).

The disordered stretch occupies residues 10 to 29 (EKQRQAAQAQAPAQGRSAAS). Positions 14-29 (QAAQAQAPAQGRSAAS) are enriched in low complexity. The region spanning 30-174 (PAQLRVEKDL…VQATMMGGHL (145 aa)) is the UBC core domain. Cysteine 112 (glycyl thioester intermediate) is an active-site residue.

This sequence belongs to the ubiquitin-conjugating enzyme family. UBC12 subfamily.

The catalysed reaction is [E1 NEDD8-activating enzyme]-S-[NEDD8 protein]-yl-L-cysteine + [E2 NEDD8-conjugating enzyme]-L-cysteine = [E1 NEDD8-activating enzyme]-L-cysteine + [E2 NEDD8-conjugating enzyme]-S-[NEDD8-protein]-yl-L-cysteine.. Its pathway is protein modification; protein neddylation. Accepts the ubiquitin-like protein NEDD8/RUB1 from the UBA3-ULA1 E1 complex and catalyzes its covalent attachment to other proteins. The polypeptide is NEDD8-conjugating enzyme UBC12 (UBC12) (Eremothecium gossypii (strain ATCC 10895 / CBS 109.51 / FGSC 9923 / NRRL Y-1056) (Yeast)).